Reading from the N-terminus, the 130-residue chain is Small ribosomal subunit protein uS11 (130 aa).

Belongs to the universal ribosomal protein uS11 family. As to quaternary structure, part of the 30S ribosomal subunit. Interacts with proteins S7 and S18. Binds to IF-3.

Functionally, located on the platform of the 30S subunit, it bridges several disparate RNA helices of the 16S rRNA. Forms part of the Shine-Dalgarno cleft in the 70S ribosome. The protein is Small ribosomal subunit protein uS11 of Parasynechococcus marenigrum (strain WH8102).